The following is a 271-amino-acid chain: Putative phosphoenolpyruvate synthase regulatory protein (271 aa).

Residue G152–T159 coordinates ADP.

This sequence belongs to the pyruvate, phosphate/water dikinase regulatory protein family. PSRP subfamily.

The enzyme catalyses [pyruvate, water dikinase] + ADP = [pyruvate, water dikinase]-phosphate + AMP + H(+). It carries out the reaction [pyruvate, water dikinase]-phosphate + phosphate + H(+) = [pyruvate, water dikinase] + diphosphate. Its function is as follows. Bifunctional serine/threonine kinase and phosphorylase involved in the regulation of the phosphoenolpyruvate synthase (PEPS) by catalyzing its phosphorylation/dephosphorylation. The polypeptide is Putative phosphoenolpyruvate synthase regulatory protein (Legionella pneumophila (strain Lens)).